Consider the following 280-residue polypeptide: Sulfur carrier protein FdhD (280 aa).

Cysteine 121 serves as the catalytic Cysteine persulfide intermediate. Phenylalanine 258–arginine 263 provides a ligand contact to Mo-bis(molybdopterin guanine dinucleotide).

This sequence belongs to the FdhD family.

The protein resides in the cytoplasm. In terms of biological role, required for formate dehydrogenase (FDH) activity. Acts as a sulfur carrier protein that transfers sulfur from IscS to the molybdenum cofactor prior to its insertion into FDH. The polypeptide is Sulfur carrier protein FdhD (Cronobacter sakazakii (strain ATCC BAA-894) (Enterobacter sakazakii)).